The sequence spans 362 residues: MANIEKTEFHVPAPVSAAGNQKSSLGNADVDARLQSNEGEVETSLRPRSLDEFIGQPKVRDQLNLVLSGAKSRGVAPDHVLLSGPPGLGKTTMAMIIAYELGTSLRMTSGPALERAGDLAAMLSNLMEGDVLFIDEIHRMARPAEEMLYMAMEDFRIDVIVGKGPGATSIPLELAPFTLVGATTRSGMLTGPLRDRFGFTAQMEFYEVEDLTKVVVRAAAVLGVSIDHDAAVEIASRSRGTPRIANRLLRRVRDFAEVNADGHINLAAAQAALVVFDVDEMGLDRLDRAVLEALIKGHGGGPVGINTLALAVGEEPSTVEEVCEPYLVRAGMVTRTGRGRVATATAWRHLGLEPPEGIIGSL.

A disordered region spans residues 1–27 (MANIEKTEFHVPAPVSAAGNQKSSLGN). The segment at 13 to 206 (APVSAAGNQK…FGFTAQMEFY (194 aa)) is large ATPase domain (RuvB-L). Residues leucine 45, arginine 46, glycine 87, lysine 90, threonine 91, threonine 92, 153–155 (EDF), arginine 196, tyrosine 206, and arginine 243 contribute to the ATP site. Threonine 91 serves as a coordination point for Mg(2+). The interval 207–277 (EVEDLTKVVV…AAQAALVVFD (71 aa)) is small ATPAse domain (RuvB-S). The interval 280–362 (EMGLDRLDRA…EPPEGIIGSL (83 aa)) is head domain (RuvB-H). 2 residues coordinate DNA: arginine 335 and arginine 340.

The protein belongs to the RuvB family. In terms of assembly, homohexamer. Forms an RuvA(8)-RuvB(12)-Holliday junction (HJ) complex. HJ DNA is sandwiched between 2 RuvA tetramers; dsDNA enters through RuvA and exits via RuvB. An RuvB hexamer assembles on each DNA strand where it exits the tetramer. Each RuvB hexamer is contacted by two RuvA subunits (via domain III) on 2 adjacent RuvB subunits; this complex drives branch migration. In the full resolvosome a probable DNA-RuvA(4)-RuvB(12)-RuvC(2) complex forms which resolves the HJ.

Its subcellular location is the cytoplasm. It carries out the reaction ATP + H2O = ADP + phosphate + H(+). In terms of biological role, the RuvA-RuvB-RuvC complex processes Holliday junction (HJ) DNA during genetic recombination and DNA repair, while the RuvA-RuvB complex plays an important role in the rescue of blocked DNA replication forks via replication fork reversal (RFR). RuvA specifically binds to HJ cruciform DNA, conferring on it an open structure. The RuvB hexamer acts as an ATP-dependent pump, pulling dsDNA into and through the RuvAB complex. RuvB forms 2 homohexamers on either side of HJ DNA bound by 1 or 2 RuvA tetramers; 4 subunits per hexamer contact DNA at a time. Coordinated motions by a converter formed by DNA-disengaged RuvB subunits stimulates ATP hydrolysis and nucleotide exchange. Immobilization of the converter enables RuvB to convert the ATP-contained energy into a lever motion, pulling 2 nucleotides of DNA out of the RuvA tetramer per ATP hydrolyzed, thus driving DNA branch migration. The RuvB motors rotate together with the DNA substrate, which together with the progressing nucleotide cycle form the mechanistic basis for DNA recombination by continuous HJ branch migration. Branch migration allows RuvC to scan DNA until it finds its consensus sequence, where it cleaves and resolves cruciform DNA. This chain is Holliday junction branch migration complex subunit RuvB, found in Corynebacterium diphtheriae (strain ATCC 700971 / NCTC 13129 / Biotype gravis).